The chain runs to 1305 residues: Rho GTPase-activating protein 33 (1305 aa).

The disordered stretch occupies residues 1–64 (MLQAQKQSDP…KPGKRLSAPR (64 aa)). S32 is modified (phosphoserine). The PX; atypical domain occupies 83–192 (FGHIQLLLSP…CGPVLTWMEL (110 aa)). The SH3 domain maps to 210–272 (PAVAAAHVVK…PSECVELFTE (63 aa)). Residues 339-534 (CDLGEHLSNS…FLLTHVEVLF (196 aa)) enclose the Rho-GAP domain. 3 disordered regions span residues 575-818 (RTQG…LDIS), 864-1054 (LSDT…SFFS), and 1115-1305 (SYSG…RSYC). Low complexity predominate over residues 582 to 595 (TPTEPTTPKTPASP). S594 is subject to Phosphoserine. The span at 596–608 (VERRKRERAEKQR) shows a compositional bias: basic and acidic residues. The span at 646–669 (SGSRPDTVTLRSAKSEESLSSQAS) shows a compositional bias: polar residues. Phosphoserine is present on S660. A compositionally biased stretch (low complexity) spans 694–733 (APAGSCESLSSSSSSSSSSSSSSSSESSAGGLGPLSGSPS). Residue S749 is modified to Phosphoserine. The segment covering 774–786 (PGDPAPPASPAPP) has biased composition (pro residues). Low complexity predominate over residues 787-798 (ASASAFPPRATP). Over residues 864–873 (LSDTCQQEIS) the composition is skewed to polar residues. Residues 895–915 (LLPPPLPLLRPGGAPPPPPKN) show a composition bias toward pro residues. Over residues 916–940 (PARLMALALAERAQQVAEQQSQQEQ) the composition is skewed to low complexity. 3 stretches are compositionally biased toward polar residues: residues 992–1020 (RQQSDGSLVRSQRPLGTSRRSPRGPSQVS), 1039–1054 (SPCSVPSQGSNPSFFS), and 1115–1125 (SYSGPSRSWSP). The residue at position 1188 (Y1188) is a Phosphotyrosine. Residues 1194–1208 (GPRGPSPASSSSSSP) show a composition bias toward low complexity. R1263 bears the Omega-N-methylarginine mark. Over residues 1292 to 1305 (SWSLHSEGQTRSYC) the composition is skewed to polar residues.

This sequence belongs to the PX domain-containing GAP family. Specifically interacts with CDC42 and RHOQ/TC10 through its Rho-GAP domain. Interacts with NEK6. Highly expressed in brain and testis. Also expressed in white adipose tissue (WAT) and muscle at a low level.

The protein resides in the cell membrane. Its function is as follows. May be involved in several stages of intracellular trafficking. Could play an important role in the regulation of glucose transport by insulin. May act as a downstream effector of RHOQ/TC10 in the regulation of insulin-stimulated glucose transport. In Mus musculus (Mouse), this protein is Rho GTPase-activating protein 33 (Arhgap33).